The sequence spans 102 residues: NADH-quinone oxidoreductase subunit K 1 (102 aa).

3 consecutive transmembrane segments (helical) span residues 5–25, 30–50, and 62–82; these read LYEV…CVVA, VIMM…TFVG, and VFSL…LAMV.

It belongs to the complex I subunit 4L family. NDH-1 is composed of 14 different subunits. Subunits NuoA, H, J, K, L, M, N constitute the membrane sector of the complex.

It localises to the cell inner membrane. It carries out the reaction a quinone + NADH + 5 H(+)(in) = a quinol + NAD(+) + 4 H(+)(out). Its function is as follows. NDH-1 shuttles electrons from NADH, via FMN and iron-sulfur (Fe-S) centers, to quinones in the respiratory chain. The immediate electron acceptor for the enzyme in this species is believed to be ubiquinone. Couples the redox reaction to proton translocation (for every two electrons transferred, four hydrogen ions are translocated across the cytoplasmic membrane), and thus conserves the redox energy in a proton gradient. This Citrifermentans bemidjiense (strain ATCC BAA-1014 / DSM 16622 / JCM 12645 / Bem) (Geobacter bemidjiensis) protein is NADH-quinone oxidoreductase subunit K 1.